The chain runs to 434 residues: Ribitol-5-phosphate xylosyltransferase 1 (434 aa).

Topologically, residues 1-7 (MRFFRRK) are cytoplasmic. Residues 8–28 (IAIIVILAYAIFSLYAAYNVF) form a helical; Signal-anchor for type II membrane protein membrane-spanning segment. At 29–434 (FSKRVISRVH…VLEENFFKIT (406 aa)) the chain is on the extracellular side.

The protein belongs to the TMEM5 family.

Its subcellular location is the golgi apparatus membrane. It catalyses the reaction 3-O-[Rib-ol-P-Rib-ol-P-3-beta-D-GalNAc-(1-&gt;3)-beta-D-GlcNAc-(1-&gt;4)-(O-6-P-alpha-D-Man)]-Thr-[protein] + UDP-alpha-D-xylose = 3-O-[beta-D-Xyl-(1-&gt;4)-Rib-ol-P-Rib-ol-P-3-beta-D-GalNAc-(1-&gt;3)-beta-D-GlcNAc-(1-&gt;4)-(O-6-P-alpha-D-Man)]-Thr-[protein] + UDP + H(+). Its pathway is protein modification; protein glycosylation. In terms of biological role, acts as a UDP-D-xylose:ribitol-5-phosphate beta1,4-xylosyltransferase, which catalyzes the transfer of UDP-D-xylose to ribitol 5-phosphate (Rbo5P) to form the Xylbeta1-4Rbo5P linkage on O-mannosyl glycan. Participates in the biosynthesis of the phosphorylated O-mannosyl trisaccharide (N-acetylgalactosamine-beta-3-N-acetylglucosamine-beta-4-(phosphate-6-)mannose), a carbohydrate structure present in alpha-dystroglycan (DAG1), which is required for binding laminin G-like domain-containing extracellular proteins with high affinity. In Danio rerio (Zebrafish), this protein is Ribitol-5-phosphate xylosyltransferase 1 (rxylt1).